A 1157-amino-acid polypeptide reads, in one-letter code: Pesticidal crystal protein Cry9Ca (1157 aa).

Belongs to the delta endotoxin family.

Promotes colloidosmotic lysis by binding to the midgut epithelial cells of Lepidoptera larvae. Has a fairly broad spectrum of activity against members of the Pyralidae, Plutellidae, Sphingidae and Noctuidae families. It was the first insecticidal crystal protein characterized with activity against cutworms. No activity is observed against some beetles, such as the Colorado potato beetle. In Bacillus thuringiensis subsp. tolworthi, this protein is Pesticidal crystal protein Cry9Ca (cry9Ca).